A 309-amino-acid chain; its full sequence is Ribosomal RNA small subunit methyltransferase H (309 aa).

Residues 33 to 35 (GGH), Asp53, Phe79, Asp100, and Gln107 contribute to the S-adenosyl-L-methionine site.

Belongs to the methyltransferase superfamily. RsmH family.

It localises to the cytoplasm. The enzyme catalyses cytidine(1402) in 16S rRNA + S-adenosyl-L-methionine = N(4)-methylcytidine(1402) in 16S rRNA + S-adenosyl-L-homocysteine + H(+). Specifically methylates the N4 position of cytidine in position 1402 (C1402) of 16S rRNA. The polypeptide is Ribosomal RNA small subunit methyltransferase H (Clostridium botulinum (strain Langeland / NCTC 10281 / Type F)).